We begin with the raw amino-acid sequence, 312 residues long: Ribosomal protein L11 methyltransferase (312 aa).

4 residues coordinate S-adenosyl-L-methionine: Thr160, Gly181, Asp203, and Asn246.

The protein belongs to the methyltransferase superfamily. PrmA family.

It is found in the cytoplasm. It catalyses the reaction L-lysyl-[protein] + 3 S-adenosyl-L-methionine = N(6),N(6),N(6)-trimethyl-L-lysyl-[protein] + 3 S-adenosyl-L-homocysteine + 3 H(+). In terms of biological role, methylates ribosomal protein L11. The chain is Ribosomal protein L11 methyltransferase from Staphylococcus carnosus (strain TM300).